The chain runs to 538 residues: Dolichol kinase (538 aa).

Residues 1–18 lie on the Lumenal side of the membrane; that stretch reads MTRECAPPTPGSGAPLSG. The chain crosses the membrane as a helical span at residues 19-39; the sequence is SVLAEAAVVFVVVLSIHAAVW. Residues 40–74 are Cytoplasmic-facing; the sequence is DRYSWCAVALAVQAFYVQYKWDRLLQQGSAVFQFR. Residues 75-95 traverse the membrane as a helical segment; that stretch reads MSANSGLLPASVVMPLLGLVM. At 96-111 the chain is on the lumenal side; it reads KERCQAAGNPYFERFG. Residues 112-132 traverse the membrane as a helical segment; it reads IVVAATGMAVALFSSVLALGI. Residues 133-134 lie on the Cytoplasmic side of the membrane; sequence TR. Residues 135–155 traverse the membrane as a helical segment; the sequence is PVPTNTCVISGLAGGVIIYIM. The Lumenal segment spans residues 156 to 163; that stretch reads KHSLSVGE. A helical transmembrane segment spans residues 164-184; it reads VIEVLEALLIFVYLNMILLYL. Topologically, residues 185–188 are cytoplasmic; it reads LPRC. The helical transmembrane segment at 189-209 threads the bilayer; sequence FTPGEALLVLGGISFMLNQLI. Residues 210–224 lie on the Lumenal side of the membrane; sequence KRSLTVVESQGDPLD. The chain crosses the membrane as a helical span at residues 225–245; that stretch reads FFLLVVVVGMVLMGIFFSTLF. Residues 246 to 254 are Cytoplasmic-facing; it reads VFMDSGTWA. The chain crosses the membrane as a helical span at residues 255 to 275; that stretch reads SSIFFHLMTCVLGLGVVLPWL. Residues 276-297 lie on the Lumenal side of the membrane; that stretch reads HRLIRRNPLLWLFQFLFQTETR. Residues 298–318 form a helical membrane-spanning segment; the sequence is VYLLAYWCLLATVACLVVLYQ. At 319–337 the chain is on the cytoplasmic side; that stretch reads NAKRSSSESKKHQAPTITR. Residues 338–354 traverse the membrane as a helical segment; that stretch reads KYFHFIVVATYIPGIIL. Residues 355–359 are Lumenal-facing; sequence DRPLL. A helical transmembrane segment spans residues 360–380; the sequence is YVAATVCLAVFIFLEYVRYFR. Residues 381-401 are Cytoplasmic-facing; it reads IKPLGHTLRSLLSLFLDERDS. The chain crosses the membrane as a helical span at residues 402 to 422; the sequence is GPLILTHIYLLLGMSLPIWLV. Over 423-436 the chain is Lumenal; sequence PRPCTQKGSLGGAR. The helical transmembrane segment at 437 to 457 threads the bilayer; it reads ALVPYAGVLAVGVGDTVASIF. The Cytoplasmic portion of the chain corresponds to 458-472; the sequence is GSTMGEIRWPGTKKT. A CTP-binding region spans residues 459–474; the sequence is STMGEIRWPGTKKTFE. Residues 473-493 traverse the membrane as a helical segment; that stretch reads FEGTMTSIFAQIISVALILIF. The Lumenal portion of the chain corresponds to 494–495; sequence DS. A helical membrane pass occupies residues 496-516; it reads GVDLNYSYAWILGSISTVSLL. Over 517–538 the chain is Cytoplasmic; it reads EAYTTQIDNLLLPLYLLILLMA.

The protein belongs to the polyprenol kinase family.

It localises to the endoplasmic reticulum membrane. It catalyses the reaction a di-trans,poly-cis-dolichol + CTP = a di-trans,poly-cis-dolichyl phosphate + CDP + H(+). The protein operates within protein modification; protein glycosylation. In terms of biological role, catalyzes CTP-mediated phosphorylation of dolichol, the terminal step in de novo dolichyl monophosphate (Dol-P) biosynthesis. Dol-P is a lipid carrier essential for the synthesis of N-linked and O-linked oligosaccharides and for GPI anchors. The sequence is that of Dolichol kinase (DOLK) from Bos taurus (Bovine).